The primary structure comprises 269 residues: Protein IAL1 (269 aa).

Residues 32-133 form the LOB domain; sequence SPCAACKFLR…QDLARAKYEL (102 aa).

It belongs to the LOB domain-containing protein family. In terms of tissue distribution, expressed in leaves, leaf primordia, immature ears, immature tassels, whole ovules, silk and husk leaves.

The protein resides in the nucleus. The polypeptide is Protein IAL1 (Zea mays (Maize)).